Here is a 140-residue protein sequence, read N- to C-terminus: Nucleoside diphosphate kinase (140 aa).

ATP contacts are provided by Lys-11, Phe-59, Arg-87, Thr-93, Arg-104, and Asn-114. His-117 functions as the Pros-phosphohistidine intermediate in the catalytic mechanism.

It belongs to the NDK family. As to quaternary structure, homotetramer. Mg(2+) serves as cofactor.

It is found in the cytoplasm. The enzyme catalyses a 2'-deoxyribonucleoside 5'-diphosphate + ATP = a 2'-deoxyribonucleoside 5'-triphosphate + ADP. The catalysed reaction is a ribonucleoside 5'-diphosphate + ATP = a ribonucleoside 5'-triphosphate + ADP. Functionally, major role in the synthesis of nucleoside triphosphates other than ATP. The ATP gamma phosphate is transferred to the NDP beta phosphate via a ping-pong mechanism, using a phosphorylated active-site intermediate. In Cereibacter sphaeroides (strain ATCC 17025 / ATH 2.4.3) (Rhodobacter sphaeroides), this protein is Nucleoside diphosphate kinase.